Consider the following 583-residue polypeptide: GTP diphosphokinase CRSH1, chloroplastic (583 aa).

The span at 1–13 shows a compositional bias: low complexity; that stretch reads MATAATTSAAAIP. Residues 1-68 form a disordered region; sequence MATAATTSAA…SSSSSTPAEG (68 aa). A chloroplast-targeting transit peptide spans 1-69; the sequence is MATAATTSAA…SSSSTPAEGG (69 aa). The segment covering 19–39 has biased composition (basic residues); sequence RRQHPHPRRPGLRPRRLHRLR. Positions 40–66 are enriched in low complexity; that stretch reads LPAQAAAAAAASSPSTSSSSSSSSTPA. Positions 119-219 constitute an HD domain; sequence ALARALAIAA…LELALKLDMM (101 aa). EF-hand domains lie at 473-508 and 510-542; these read GDSN…LGAG and KDAK…IELM. D486, N488, D490, R492, E497, D520, N522, D524, S526, and E531 together coordinate Ca(2+).

Belongs to the RelA/SpoT family. As to expression, expressed in roots and shoots.

It localises to the plastid. It is found in the chloroplast. It catalyses the reaction GTP + ATP = guanosine 3'-diphosphate 5'-triphosphate + AMP. With respect to regulation, activated by calcium. Possesses calcium-dependent ppGpp (guanosine 3'-diphosphate 5'-diphosphate) synthetase activity in vitro and is able to functionally complement E.coli relA mutants. May be involved in a rapid plant ppGpp-mediated response to pathogens and other stresses. This is GTP diphosphokinase CRSH1, chloroplastic from Oryza sativa subsp. japonica (Rice).